Consider the following 78-residue polypeptide: Acyl carrier protein (78 aa).

Residues 2-77 (STIEERVKKI…AAIDYVNSHK (76 aa)) enclose the Carrier domain. Serine 37 carries the post-translational modification O-(pantetheine 4'-phosphoryl)serine.

Belongs to the acyl carrier protein (ACP) family. Post-translationally, 4'-phosphopantetheine is transferred from CoA to a specific serine of apo-ACP by AcpS. This modification is essential for activity because fatty acids are bound in thioester linkage to the sulfhydryl of the prosthetic group.

The protein localises to the cytoplasm. The protein operates within lipid metabolism; fatty acid biosynthesis. Its function is as follows. Carrier of the growing fatty acid chain in fatty acid biosynthesis. The chain is Acyl carrier protein from Pseudomonas putida (strain GB-1).